We begin with the raw amino-acid sequence, 397 residues long: MSIENTDVHPEGYDDYVTFLKRRIRQLELQVRTLEADKERLERELSRLRMEMSRLRQPPAFAGNVIEVLDDERAIVQNYNGPRFVVRIAPWIERDKLKPGARVALDQRTMAIVELLPSEKDPSVLGFEVIERPKVTYNDIGGLEKQLQELREAIELPLKHPELFEQVGIEPPKGVLLYGPPGCGKTLMAKAVANHVNATFIRVVGSELVRKFIGEGARLVHELFELAKEKAPTIIFIDEIDAIGAKRMDETTGGEREVNRTLMQLLAEMDGFDPRGNVKVIAATNRPDILDPALLRPGRFDRLIEVPLPDYQGRLEILKVHTRKMNLKGVDLRVIAEITEGASGADLKAIATEAGMFAIRDRRTYVTQDDFLKAVDKVIGSEKRLAQQIAMHEVMYG.

A coiled-coil region spans residues 15 to 58; sequence DYVTFLKRRIRQLELQVRTLEADKERLERELSRLRMEMSRLRQP. Residues 182–187 and H321 contribute to the ATP site; that span reads GCGKTL. The tract at residues 395–397 is docks into pockets in the proteasome alpha-ring to cause gate opening; that stretch reads MYG.

This sequence belongs to the AAA ATPase family. In terms of assembly, homohexamer. The hexameric complex has a two-ring architecture resembling a top hat that caps the 20S proteasome core at one or both ends. Upon ATP-binding, the C-terminus of PAN interacts with the alpha-rings of the proteasome core by binding to the intersubunit pockets.

It localises to the cytoplasm. Its function is as follows. ATPase which is responsible for recognizing, binding, unfolding and translocation of substrate proteins into the archaeal 20S proteasome core particle. Is essential for opening the gate of the 20S proteasome via an interaction with its C-terminus, thereby allowing substrate entry and access to the site of proteolysis. Thus, the C-termini of the proteasomal ATPase function like a 'key in a lock' to induce gate opening and therefore regulate proteolysis. Unfolding activity requires energy from ATP hydrolysis, whereas ATP binding alone promotes ATPase-20S proteasome association which triggers gate opening, and supports translocation of unfolded substrates. The sequence is that of Proteasome-activating nucleotidase from Thermococcus kodakarensis (strain ATCC BAA-918 / JCM 12380 / KOD1) (Pyrococcus kodakaraensis (strain KOD1)).